A 665-amino-acid polypeptide reads, in one-letter code: ELMO family protein LMO1 (665 aa).

Forms an active heterodimer with DCK1.

It is found in the cytoplasm. The protein localises to the mitochondrion. Its function is as follows. Forms a transiant heterodimeric complex with DCK1, that acts as a guanine nucleotide exchange factor (GEF) for the small GTPase RHO5. DCK1, LMO1 and RHO5 relocate to mitochondria upon oxidative stress and trigger cell death. The DCK1/LMO1/RHO5 signaling module mediates mitochondrial turnover under nitrogen starvation conditions via mitophagy. The DCK1/LMO1/RHO5 signaling module also plays a role in cell wall integrity signaling. The sequence is that of ELMO family protein LMO1 from Saccharomyces cerevisiae (strain ATCC 204508 / S288c) (Baker's yeast).